We begin with the raw amino-acid sequence, 218 residues long: Zinc finger CCHC-type and RNA-binding motif-containing protein 1 (218 aa).

Positions serine 10–aspartate 88 constitute an RRM domain. The CCHC-type zinc-finger motif lies at serine 105 to lysine 122. Residues alanine 119 to aspartate 218 form a disordered region. Residues glutamine 132–histidine 188 are a coiled coil. Acidic residues predominate over residues glutamate 144 to alanine 164. Basic and acidic residues predominate over residues arginine 178–arginine 201.

As to quaternary structure, component of the U11/U12 snRNPs that are part of the U12-type spliceosome.

It is found in the nucleus. The sequence is that of Zinc finger CCHC-type and RNA-binding motif-containing protein 1 (zcrb1) from Xenopus laevis (African clawed frog).